An 869-amino-acid polypeptide reads, in one-letter code: Valine--tRNA ligase (869 aa).

A 'HIGH' region motif is present at residues 47–57; that stretch reads PYPTGNFHIGN. A 'KMSKS' region motif is present at residues 521-525; that stretch reads KMSKS. Lys524 lines the ATP pocket.

It belongs to the class-I aminoacyl-tRNA synthetase family. ValS type 2 subfamily.

It localises to the cytoplasm. The enzyme catalyses tRNA(Val) + L-valine + ATP = L-valyl-tRNA(Val) + AMP + diphosphate. Its function is as follows. Catalyzes the attachment of valine to tRNA(Val). As ValRS can inadvertently accommodate and process structurally similar amino acids such as threonine, to avoid such errors, it has a 'posttransfer' editing activity that hydrolyzes mischarged Thr-tRNA(Val) in a tRNA-dependent manner. The protein is Valine--tRNA ligase of Methanosarcina mazei (strain ATCC BAA-159 / DSM 3647 / Goe1 / Go1 / JCM 11833 / OCM 88) (Methanosarcina frisia).